The sequence spans 548 residues: Chaperonin GroEL (548 aa).

ATP is bound by residues 30–33, Lys-51, 87–91, Gly-415, and Asp-495; these read TLGP and DGTTT.

This sequence belongs to the chaperonin (HSP60) family. Forms a cylinder of 14 subunits composed of two heptameric rings stacked back-to-back. Interacts with the co-chaperonin GroES.

It is found in the cytoplasm. The enzyme catalyses ATP + H2O + a folded polypeptide = ADP + phosphate + an unfolded polypeptide.. Its function is as follows. Together with its co-chaperonin GroES, plays an essential role in assisting protein folding. The GroEL-GroES system forms a nano-cage that allows encapsulation of the non-native substrate proteins and provides a physical environment optimized to promote and accelerate protein folding. The sequence is that of Chaperonin GroEL from Photorhabdus laumondii subsp. laumondii (strain DSM 15139 / CIP 105565 / TT01) (Photorhabdus luminescens subsp. laumondii).